The following is a 1627-amino-acid chain: Pappalysin-1 (1627 aa).

Residues methionine 1–alanine 22 form the signal peptide. Residues glutamate 23–arginine 81 constitute a propeptide that is removed on maturation. The interval glutamate 23–phenylalanine 99 is disordered. The segment covering alanine 42–alanine 51 has biased composition (low complexity). 17 cysteine pairs are disulfide-bonded: cysteine 144/cysteine 235, cysteine 327/cysteine 622, cysteine 332/cysteine 657, cysteine 414/cysteine 428, cysteine 424/cysteine 440, cysteine 457/cysteine 473, cysteine 474/cysteine 485, cysteine 583/cysteine 600, cysteine 587/cysteine 612, cysteine 710/cysteine 878, cysteine 713/cysteine 881, cysteine 753/cysteine 835, cysteine 775/cysteine 781, cysteine 947/cysteine 975, cysteine 960/cysteine 971, cysteine 983/cysteine 990, and cysteine 999/cysteine 1011. The metalloprotease stretch occupies residues methionine 272–cysteine 583. Residues asparagine 390 and asparagine 402 are each glycosylated (N-linked (GlcNAc...) asparagine). A glycan (N-linked (GlcNAc...) asparagine) is linked at asparagine 429. Asparagine 480 is a glycosylation site (N-linked (GlcNAc...) asparagine). Histidine 562 is a Zn(2+) binding site. Residue glutamate 563 is part of the active site. Zn(2+) is bound by residues histidine 566 and histidine 572. N-linked (GlcNAc...) asparagine glycans are attached at residues asparagine 601, asparagine 619, and asparagine 725. The interval serine 733–lysine 754 is disordered. Over residues serine 739–glutamine 751 the composition is skewed to basic and acidic residues. Asparagine 825 is a glycosylation site (N-linked (GlcNAc...) asparagine). The N-linked (GlcNAc...) asparagine glycan is linked to asparagine 1026. 19 disulfides stabilise this stretch: cysteine 1036–cysteine 1070, cysteine 1051–cysteine 1139, cysteine 1192–cysteine 1205, cysteine 1215–cysteine 1269, cysteine 1227–cysteine 1238, cysteine 1242–cysteine 1280, cysteine 1285–cysteine 1329, cysteine 1300–cysteine 1310, cysteine 1314–cysteine 1342, cysteine 1346–cysteine 1399, cysteine 1362–cysteine 1373, cysteine 1377–cysteine 1410, cysteine 1415–cysteine 1458, cysteine 1428–cysteine 1438, cysteine 1442–cysteine 1471, cysteine 1478–cysteine 1539, cysteine 1492–cysteine 1502, cysteine 1506–cysteine 1554, and cysteine 1558–cysteine 1576. Sushi domains are found at residues threonine 1213–proline 1282, valine 1283–leucine 1344, methionine 1345–proline 1412, valine 1413–glutamate 1473, and glycine 1476–lysine 1556. N-linked (GlcNAc...) asparagine glycosylation is found at asparagine 1222 and asparagine 1226. Residue asparagine 1323 is glycosylated (N-linked (GlcNAc...) asparagine). The N-linked (GlcNAc...) asparagine glycan is linked to asparagine 1465. The N-linked (GlcNAc...) asparagine glycan is linked to asparagine 1519.

This sequence belongs to the peptidase M43B family. Homodimer; disulfide-linked. In pregnancy serum, predominantly found as a disulfide-linked 2:2 heterotetramer with the proform of PRG2. Zn(2+) serves as cofactor. There appear to be no free sulfhydryl groups. As to expression, high levels in placenta and pregnancy serum. In placenta, expressed in X cells in septa and anchoring villi, and in syncytiotrophoblasts in the chorionic villi. Lower levels are found in a variety of other tissues including kidney, myometrium, endometrium, ovaries, breast, prostate, bone marrow, colon, fibroblasts and osteoblasts.

It localises to the secreted. It catalyses the reaction Cleavage of the 135-Met-|-Lys-136 bond in insulin-like growth factor binding protein (IGFBP)-4, and the 143-Ser-|-Lys-144 bond in IGFBP-5.. With respect to regulation, inhibited by complexation with the proform of PRG2. Functionally, metalloproteinase which specifically cleaves IGFBP-4 and IGFBP-5, resulting in release of bound IGF. Cleavage of IGFBP-4 is dramatically enhanced by the presence of IGF, whereas cleavage of IGFBP-5 is slightly inhibited by the presence of IGF. The chain is Pappalysin-1 (PAPPA) from Homo sapiens (Human).